Here is a 151-residue protein sequence, read N- to C-terminus: Putative pre-16S rRNA nuclease (151 aa).

Belongs to the YqgF nuclease family.

The protein resides in the cytoplasm. In terms of biological role, could be a nuclease involved in processing of the 5'-end of pre-16S rRNA. The protein is Putative pre-16S rRNA nuclease of Prochlorococcus marinus (strain MIT 9515).